The chain runs to 614 residues: ATP-dependent RNA helicase dbp-3 (614 aa).

The interval Met-1–Asn-138 is disordered. Basic and acidic residues predominate over residues Arg-9–Lys-36. 2 stretches are compositionally biased toward basic residues: residues Glu-37–Lys-58 and Lys-91–Lys-109. Low complexity predominate over residues Glu-117 to Asn-138. Positions Met-180–Ser-207 match the Q motif motif. Residues Trp-210 to Val-394 form the Helicase ATP-binding domain. Ala-223–Thr-230 is an ATP binding site. A DEAD box motif is present at residues Asp-340–Asp-343. Residues Arg-435–Gly-584 enclose the Helicase C-terminal domain.

The protein belongs to the DEAD box helicase family. DDX5/DBP2 subfamily.

The protein resides in the nucleus. It localises to the nucleolus. The enzyme catalyses ATP + H2O = ADP + phosphate + H(+). In terms of biological role, ATP-dependent RNA helicase required for 60S ribosomal subunit synthesis. Involved in efficient pre-rRNA processing, predominantly at site A3, which is necessary for the normal formation of 25S and 5.8S rRNAs. The protein is ATP-dependent RNA helicase dbp-3 (dbp-3) of Neurospora crassa (strain ATCC 24698 / 74-OR23-1A / CBS 708.71 / DSM 1257 / FGSC 987).